We begin with the raw amino-acid sequence, 152 residues long: Aspartate carbamoyltransferase regulatory chain (152 aa).

Zn(2+) contacts are provided by Cys-108, Cys-113, Cys-137, and Cys-140.

The protein belongs to the PyrI family. Contains catalytic and regulatory chains. The cofactor is Zn(2+).

In terms of biological role, involved in allosteric regulation of aspartate carbamoyltransferase. This is Aspartate carbamoyltransferase regulatory chain from Neisseria meningitidis serogroup B (strain ATCC BAA-335 / MC58).